The chain runs to 1216 residues: 1-phosphatidylinositol 4,5-bisphosphate phosphodiesterase beta-1 (1216 aa).

Residue Cys17 is the site of S-palmitoyl cysteine attachment. Phosphoserine is present on Ser236. The 152-residue stretch at 316-467 (EDMSQPLSHY…LMYKILVKNK (152 aa)) folds into the PI-PLC X-box domain. Active-site residues include His331 and His378. A Phosphoserine modification is found at Ser417. A disordered region spans residues 469–534 (KSHKSSEGSG…MDEGTAGSEA (66 aa)). Over residues 472-483 (KSSEGSGKKKLS) the composition is skewed to basic and acidic residues. The segment covering 491-501 (SDSSSVFEPSS) has biased composition (low complexity). Over residues 507–518 (ADTESDDDDDDD) the composition is skewed to acidic residues. Residue Thr509 is modified to Phosphothreonine. 2 positions are modified to phosphoserine: Ser511 and Ser582. Positions 540-656 (MSNLVNYIQP…GYRLKPEFMR (117 aa)) constitute a PI-PLC Y-box domain. The 129-residue stretch at 656 to 784 (RRPDKHFDPF…CLRNERNQPL (129 aa)) folds into the C2 domain. Disordered stretches follow at residues 834–891 (DEEE…VKAP), 933–993 (LVKR…IEQD), 1071–1095 (KMDK…EEEK), and 1172–1216 (KISE…DTPL). Residue Ser887 is modified to Phosphoserine; by PKC. Composition is skewed to basic and acidic residues over residues 941-951 (TTDLIKEHTTK) and 959-979 (YLRR…KKSE). A phosphoserine mark is found at Ser978 and Ser987. A compositionally biased stretch (polar residues) spans 980 to 991 (PSSPDHVSSTIE). Over residues 1075–1095 (KRQEKITEAKSKDKSQMEEEK) the composition is skewed to basic and acidic residues. A compositionally biased stretch (polar residues) spans 1187-1198 (TSDSGKLNQKPP). Phosphoserine occurs at positions 1199 and 1200. Residues 1207-1216 (NPGKEFDTPL) show a composition bias toward basic and acidic residues.

In terms of assembly, interacts with DGKQ. Requires Ca(2+) as cofactor. Palmitoylated. Palmitoylation at Cys-17 by ZDHHC21 regulates the signaling activity of PLCB1 and the function of the endothelial barrier. Palmitoylation by ZDHHC21 is stimulated by inflammation.

It localises to the nucleus membrane. Its subcellular location is the cytoplasm. The enzyme catalyses a 1,2-diacyl-sn-glycero-3-phospho-(1D-myo-inositol-4,5-bisphosphate) + H2O = 1D-myo-inositol 1,4,5-trisphosphate + a 1,2-diacyl-sn-glycerol + H(+). The catalysed reaction is a 1,2-diacyl-sn-glycero-3-phospho-(1D-myo-inositol) + H2O = 1D-myo-inositol 1-phosphate + a 1,2-diacyl-sn-glycerol + H(+). In terms of biological role, catalyzes the hydrolysis of 1-phosphatidylinositol 4,5-bisphosphate into diacylglycerol (DAG) and inositol 1,4,5-trisphosphate (IP3) and mediates intracellular signaling downstream of G protein-coupled receptors. Regulates the function of the endothelial barrier. This is 1-phosphatidylinositol 4,5-bisphosphate phosphodiesterase beta-1 (PLCB1) from Bos taurus (Bovine).